Consider the following 304-residue polypeptide: UDP-3-O-acyl-N-acetylglucosamine deacetylase (304 aa).

Zn(2+) contacts are provided by histidine 78, histidine 237, and aspartate 241. The Proton donor role is filled by histidine 264.

Belongs to the LpxC family. It depends on Zn(2+) as a cofactor.

It catalyses the reaction a UDP-3-O-[(3R)-3-hydroxyacyl]-N-acetyl-alpha-D-glucosamine + H2O = a UDP-3-O-[(3R)-3-hydroxyacyl]-alpha-D-glucosamine + acetate. Its pathway is glycolipid biosynthesis; lipid IV(A) biosynthesis; lipid IV(A) from (3R)-3-hydroxytetradecanoyl-[acyl-carrier-protein] and UDP-N-acetyl-alpha-D-glucosamine: step 2/6. Its function is as follows. Catalyzes the hydrolysis of UDP-3-O-myristoyl-N-acetylglucosamine to form UDP-3-O-myristoylglucosamine and acetate, the committed step in lipid A biosynthesis. In Marinobacter nauticus (strain ATCC 700491 / DSM 11845 / VT8) (Marinobacter aquaeolei), this protein is UDP-3-O-acyl-N-acetylglucosamine deacetylase.